A 334-amino-acid chain; its full sequence is tRNA-cytidine(32) 2-sulfurtransferase (334 aa).

The PP-loop motif signature appears at 74 to 79 (SGGKDS). [4Fe-4S] cluster is bound by residues C149, C152, and C240.

It belongs to the TtcA family. Homodimer. Requires Mg(2+) as cofactor. [4Fe-4S] cluster serves as cofactor.

The protein localises to the cytoplasm. It carries out the reaction cytidine(32) in tRNA + S-sulfanyl-L-cysteinyl-[cysteine desulfurase] + AH2 + ATP = 2-thiocytidine(32) in tRNA + L-cysteinyl-[cysteine desulfurase] + A + AMP + diphosphate + H(+). It functions in the pathway tRNA modification. Functionally, catalyzes the ATP-dependent 2-thiolation of cytidine in position 32 of tRNA, to form 2-thiocytidine (s(2)C32). The sulfur atoms are provided by the cysteine/cysteine desulfurase (IscS) system. This is tRNA-cytidine(32) 2-sulfurtransferase from Burkholderia ambifaria (strain ATCC BAA-244 / DSM 16087 / CCUG 44356 / LMG 19182 / AMMD) (Burkholderia cepacia (strain AMMD)).